The sequence spans 493 residues: Probable mannosyl-oligosaccharide alpha-1,2-mannosidase 1B (493 aa).

The first 18 residues, 1–18 (MHLPSLSVALALVSSSLA), serve as a signal peptide directing secretion. 2 N-linked (GlcNAc...) asparagine glycosylation sites follow: N87 and N174. A disulfide bridge connects residues C324 and C353. The active-site Proton donor is the E367. N489 carries N-linked (GlcNAc...) asparagine glycosylation.

This sequence belongs to the glycosyl hydrolase 47 family. As to quaternary structure, monomer. Ca(2+) serves as cofactor. It depends on Mg(2+) as a cofactor.

Its subcellular location is the cytoplasmic vesicle lumen. The enzyme catalyses N(4)-(alpha-D-Man-(1-&gt;2)-alpha-D-Man-(1-&gt;2)-alpha-D-Man-(1-&gt;3)-[alpha-D-Man-(1-&gt;2)-alpha-D-Man-(1-&gt;3)-[alpha-D-Man-(1-&gt;2)-alpha-D-Man-(1-&gt;6)]-alpha-D-Man-(1-&gt;6)]-beta-D-Man-(1-&gt;4)-beta-D-GlcNAc-(1-&gt;4)-beta-D-GlcNAc)-L-asparaginyl-[protein] (N-glucan mannose isomer 9A1,2,3B1,2,3) + 4 H2O = N(4)-(alpha-D-Man-(1-&gt;3)-[alpha-D-Man-(1-&gt;3)-[alpha-D-Man-(1-&gt;6)]-alpha-D-Man-(1-&gt;6)]-beta-D-Man-(1-&gt;4)-beta-D-GlcNAc-(1-&gt;4)-beta-D-GlcNAc)-L-asparaginyl-[protein] (N-glucan mannose isomer 5A1,2) + 4 beta-D-mannose. It carries out the reaction N(4)-(alpha-D-Man-(1-&gt;2)-alpha-D-Man-(1-&gt;2)-alpha-D-Man-(1-&gt;3)-[alpha-D-Man-(1-&gt;3)-[alpha-D-Man-(1-&gt;2)-alpha-D-Man-(1-&gt;6)]-alpha-D-Man-(1-&gt;6)]-beta-D-Man-(1-&gt;4)-beta-D-GlcNAc-(1-&gt;4)-beta-D-GlcNAc)-L-asparaginyl-[protein] (N-glucan mannose isomer 8A1,2,3B1,3) + 3 H2O = N(4)-(alpha-D-Man-(1-&gt;3)-[alpha-D-Man-(1-&gt;3)-[alpha-D-Man-(1-&gt;6)]-alpha-D-Man-(1-&gt;6)]-beta-D-Man-(1-&gt;4)-beta-D-GlcNAc-(1-&gt;4)-beta-D-GlcNAc)-L-asparaginyl-[protein] (N-glucan mannose isomer 5A1,2) + 3 beta-D-mannose. The protein operates within protein modification; protein glycosylation. In terms of biological role, involved in the maturation of Asn-linked oligosaccharides. Progressively trims alpha-1,2-linked mannose residues from Man(9)GlcNAc(2) to produce Man(5)GlcNAc(2). This Neosartorya fischeri (strain ATCC 1020 / DSM 3700 / CBS 544.65 / FGSC A1164 / JCM 1740 / NRRL 181 / WB 181) (Aspergillus fischerianus) protein is Probable mannosyl-oligosaccharide alpha-1,2-mannosidase 1B (mns1B).